The following is a 480-amino-acid chain: Chromosomal replication initiator protein DnaA (480 aa).

The interval 1 to 71 is domain I, interacts with DnaA modulators; it reads MKEFWQTCVS…EALAAEWYQR (71 aa). A domain II region spans residues 71 to 142; sequence RPVQVTFELP…DAANIVYERS (72 aa). Residues 143 to 359 are domain III, AAA+ region; sequence RLNTDLTFEN…GALRKVLAYA (217 aa). ATP contacts are provided by Gly-187, Gly-189, Lys-190, and Thr-191. Positions 360-480 are domain IV, binds dsDNA; that stretch reads RFHGRDVLTV…LHVLEQTLKG (121 aa).

This sequence belongs to the DnaA family. As to quaternary structure, oligomerizes as a right-handed, spiral filament on DNA at oriC.

The protein resides in the cytoplasm. Functionally, plays an essential role in the initiation and regulation of chromosomal replication. ATP-DnaA binds to the origin of replication (oriC) to initiate formation of the DNA replication initiation complex once per cell cycle. Binds the DnaA box (a 9 base pair repeat at the origin) and separates the double-stranded (ds)DNA. Forms a right-handed helical filament on oriC DNA; dsDNA binds to the exterior of the filament while single-stranded (ss)DNA is stabiized in the filament's interior. The ATP-DnaA-oriC complex binds and stabilizes one strand of the AT-rich DNA unwinding element (DUE), permitting loading of DNA polymerase. After initiation quickly degrades to an ADP-DnaA complex that is not apt for DNA replication. Binds acidic phospholipids. The polypeptide is Chromosomal replication initiator protein DnaA (Bordetella bronchiseptica (strain ATCC BAA-588 / NCTC 13252 / RB50) (Alcaligenes bronchisepticus)).